The following is a 340-amino-acid chain: C5a anaphylatoxin chemotactic receptor 1 (340 aa).

Residues threonine 1 to aspartate 30 are Extracellular-facing. The interval aspartate 3 to aspartate 11 is required for CHIPS binding. A sulfotyrosine mark is found at tyrosine 4 and tyrosine 7. The segment at aspartate 14–serine 23 is involved in C5a binding. The chain crosses the membrane as a helical span at residues isoleucine 31–phenylalanine 57. The Cytoplasmic portion of the chain corresponds to glutamate 58–threonine 62. A helical membrane pass occupies residues isoleucine 63–phenylalanine 86. The Extracellular portion of the chain corresponds to threonine 87–arginine 103. Residues cysteine 102 and cysteine 181 are joined by a disulfide bond. Residues isoleucine 104 to alanine 125 form a helical membrane-spanning segment. At aspartate 126–alanine 146 the chain is on the cytoplasmic side. The chain crosses the membrane as a helical span at residues tryptophan 147–tyrosine 167. Residues arginine 168–arginine 193 lie on the Extracellular side of the membrane. The helical transmembrane segment at alanine 194 to leucine 219 threads the bilayer. Residues leucine 220 to lysine 235 lie on the Cytoplasmic side of the membrane. The helical transmembrane segment at valine 236 to methionine 258 threads the bilayer. The Extracellular segment spans residues serine 259–aspartate 275. The chain crosses the membrane as a helical span at residues serine 276–alanine 296. Over glycine 297–threonine 340 the chain is Cytoplasmic. Serine 307, serine 310, serine 320, serine 325, serine 327, and serine 331 each carry phosphoserine.

This sequence belongs to the G-protein coupled receptor 1 family. Homodimer. May also form higher-order oligomers. Interacts (when phosphorylated) with ARRB1 and ARRB2; the interaction is associated with internalization of C5aR. Interacts (via N-terminal domain) with S.aureus chemotaxis inhibitory protein (CHIPS); the interaction blocks the receptor and may thus inhibit the immune response. Post-translationally, sulfation plays a critical role in the association of C5aR with C5a, but no significant role in the ability of the receptor to transduce a signal and mobilize calcium in response to a small peptide agonist. Sulfation at Tyr-7 is important for CHIPS binding. Phosphorylated on serine residues in response to C5a binding, resulting in internalization of the receptor and short-term desensitization to C5a.

The protein resides in the cell membrane. It is found in the cytoplasmic vesicle. Receptor for the chemotactic and inflammatory peptide anaphylatoxin C5a. The ligand interacts with at least two sites on the receptor: a high-affinity site on the extracellular N-terminus, and a second site in the transmembrane region which activates downstream signaling events. Receptor activation stimulates chemotaxis, granule enzyme release, intracellular calcium release and superoxide anion production. In Macaca mulatta (Rhesus macaque), this protein is C5a anaphylatoxin chemotactic receptor 1 (C5AR1).